A 463-amino-acid chain; its full sequence is 23S rRNA (uracil(1939)-C(5))-methyltransferase RlmD (463 aa).

Positions 6-76 constitute a TRAM domain; sequence KSRKPQQPEY…KRLEEAEMVA (71 aa). Residues cysteine 90, cysteine 96, cysteine 99, and cysteine 178 each contribute to the [4Fe-4S] cluster site. S-adenosyl-L-methionine contacts are provided by glutamine 288, phenylalanine 317, asparagine 322, glutamate 341, aspartate 368, and aspartate 389. The active-site Nucleophile is the cysteine 415.

The protein belongs to the class I-like SAM-binding methyltransferase superfamily. RNA M5U methyltransferase family. RlmD subfamily.

It carries out the reaction uridine(1939) in 23S rRNA + S-adenosyl-L-methionine = 5-methyluridine(1939) in 23S rRNA + S-adenosyl-L-homocysteine + H(+). Functionally, catalyzes the formation of 5-methyl-uridine at position 1939 (m5U1939) in 23S rRNA. The chain is 23S rRNA (uracil(1939)-C(5))-methyltransferase RlmD from Acinetobacter baumannii (strain SDF).